Reading from the N-terminus, the 442-residue chain is MPAVPLESRLLQALAPWREAGGWCVAFSGGLDSTVLLHLLAQLARSEALPALSALHVHHGLQAAADGWPAHCQAVCRSLGIPLRVERVQVAVGGSIEQAARDARYRAFQANLGEGQVLLTAQHLDDQAETLLFRLLRGAGLRGLAAMPASRPLGGGRLCRPLLGVSRAELEAYAQAHRLDWVEDPSNQDPRFSRNYLRREIMPRLASHWPQAVAGMARCAAHLREAEDLLAELAAIDLRACRQPSELDWPDWLDLPRIALEPLRRLSAARQRNLLRAWLGQLTRLPDSDHWAGWESLRDAGDDADPIWRLESGELRRGAGRIWWLPADWRAAAGPFVWERPAHPLLLPGNGRLALLGEVPAGPLRVDYRRGGEVLALAGRGRRDLKRLLNEAGVPSFLRGRLPLLFRADELLAVANIPGLDSPREGGWRLSWSPPTNDPGLS.

Residue 28-33 participates in ATP binding; the sequence is SGGLDS.

It belongs to the tRNA(Ile)-lysidine synthase family.

The protein localises to the cytoplasm. It catalyses the reaction cytidine(34) in tRNA(Ile2) + L-lysine + ATP = lysidine(34) in tRNA(Ile2) + AMP + diphosphate + H(+). Its function is as follows. Ligates lysine onto the cytidine present at position 34 of the AUA codon-specific tRNA(Ile) that contains the anticodon CAU, in an ATP-dependent manner. Cytidine is converted to lysidine, thus changing the amino acid specificity of the tRNA from methionine to isoleucine. This Pseudomonas aeruginosa (strain ATCC 15692 / DSM 22644 / CIP 104116 / JCM 14847 / LMG 12228 / 1C / PRS 101 / PAO1) protein is tRNA(Ile)-lysidine synthase.